A 605-amino-acid chain; its full sequence is Alpha-1,3-galactosidase A (605 aa).

The signal sequence occupies residues 1-20; that stretch reads MKKYLHILPACFLFYAAAHA. 6 PbH1 repeats span residues 256-278, 312-334, 421-443, 444-466, 477-507, and 517-547; these read SKNI…VSQY, KGKV…NVHG, TPEV…LVTT, PRKV…LIEA, VKDV…HPSN, and HQNI…LFRN.

This sequence belongs to the glycosyl hydrolase 110 family. A subfamily.

The enzyme catalyses Hydrolysis of terminal, non-reducing branched (1-&gt;3)-alpha-D-galactosidic residues, producing free D-galactose.. The catalysed reaction is Hydrolysis of terminal, non-reducing alpha-D-galactose residues in alpha-D-galactosides, including galactose oligosaccharides, galactomannans and galactolipids.. Functionally, alpha-galactosidase that specifically removes branched alpha-1,3-linked galactose residues present in blood group B antigens. Has no activity toward linear alpha-1,3-linked galactose residues. The polypeptide is Alpha-1,3-galactosidase A (glaA) (Bacteroides fragilis (strain YCH46)).